Reading from the N-terminus, the 51-residue chain is Large ribosomal subunit protein eL39y (51 aa).

A disordered region spans residues 1–21; that stretch reads MPSHKSFMIKKKLGKKMRQNR. Positions 7–19 are enriched in basic residues; it reads FMIKKKLGKKMRQ.

It belongs to the eukaryotic ribosomal protein eL39 family.

The chain is Large ribosomal subunit protein eL39y (RPL39B) from Arabidopsis thaliana (Mouse-ear cress).